A 185-amino-acid chain; its full sequence is Ribosome-recycling factor (185 aa).

It belongs to the RRF family.

It localises to the cytoplasm. Responsible for the release of ribosomes from messenger RNA at the termination of protein biosynthesis. May increase the efficiency of translation by recycling ribosomes from one round of translation to another. In terms of biological role, plays a role in sporulation. This is Ribosome-recycling factor from Bacillus subtilis (strain 168).